The sequence spans 403 residues: Flavohemoprotein (403 aa).

Residues 1–138 enclose the Globin domain; it reads MLTQKTKDIV…LADILAGMES (138 aa). Residue His-85 coordinates heme b. Catalysis depends on charge relay system residues Tyr-95 and Glu-137. A reductase region spans residues 149 to 403; it reads GGWAGWRRFI…EVFGPDLFAE (255 aa). The 111-residue stretch at 152–262 folds into the FAD-binding FR-type domain; that stretch reads AGWRRFIVRE…AAPYGNFYID (111 aa). Residues Tyr-190 and 206-209 contribute to the FAD site; that span reads RQYS. 275 to 280 contacts NADP(+); sequence GVGLTP. 395–398 provides a ligand contact to FAD; sequence VFGP.

Belongs to the globin family. Two-domain flavohemoproteins subfamily. The protein in the C-terminal section; belongs to the flavoprotein pyridine nucleotide cytochrome reductase family. Heme b serves as cofactor. The cofactor is FAD.

It catalyses the reaction 2 nitric oxide + NADPH + 2 O2 = 2 nitrate + NADP(+) + H(+). It carries out the reaction 2 nitric oxide + NADH + 2 O2 = 2 nitrate + NAD(+) + H(+). Functionally, is involved in NO detoxification in an aerobic process, termed nitric oxide dioxygenase (NOD) reaction that utilizes O(2) and NAD(P)H to convert NO to nitrate, which protects the bacterium from various noxious nitrogen compounds. Therefore, plays a central role in the inducible response to nitrosative stress. This is Flavohemoprotein from Rhizobium meliloti (strain 1021) (Ensifer meliloti).